We begin with the raw amino-acid sequence, 103 residues long: CLAVATA3/ESR (CLE)-related protein 22 (103 aa).

The signal sequence occupies residues 1–34 (MGNYYSRRKSRKHITTVALIILLLLLFLFLYAKA). The disordered stretch occupies residues 37–103 (SSPNIHHHST…FTGPNPLHNR (67 aa)). Positions 41 to 50 (IHHHSTHGSL) are enriched in basic residues. Residues 66-76 (NAASSRGSKYT) show a composition bias toward polar residues. P97 is subject to Hydroxyproline. An O-linked (Ara...) hydroxyproline glycan is attached at P97.

This sequence belongs to the CLV3/ESR signal peptide family. The O-glycosylation (arabinosylation) of the hydroxyproline Pro-97 enhances binding affinity of the CLE22p peptide for its receptor. In terms of tissue distribution, mostly expressed in stems and apex, and, to a lower extent, in seedlings, leaves, flowers and siliques.

It is found in the secreted. The protein localises to the extracellular space. Its function is as follows. Extracellular signal peptide that regulates cell fate. Represses root apical meristem maintenance. This chain is CLAVATA3/ESR (CLE)-related protein 22, found in Arabidopsis thaliana (Mouse-ear cress).